A 258-amino-acid polypeptide reads, in one-letter code: Probable glycerol uptake facilitator protein (258 aa).

2 helical membrane passes run 11–31 and 50–70; these read WWFL…NGAV and TVAL…NAIF. Positions 77–79 match the NPA 1 motif; it reads NPA. The next 3 helical transmembrane spans lie at 95–115, 152–172, and 180–200; these read ALIW…AMIA, FLTE…ASHF, and VPPG…FGGA. The short motif at 206–208 is the NPA 2 element; it reads NPA. The chain crosses the membrane as a helical span at residues 233 to 253; it reads WIPVIAPLSAGLVLSIIIGFS.

The protein belongs to the MIP/aquaporin (TC 1.A.8) family.

Its subcellular location is the cell membrane. The catalysed reaction is glycerol(in) = glycerol(out). Its function is as follows. Mediates glycerol diffusion across the cytoplasmic membrane via a pore-type mechanism. The polypeptide is Probable glycerol uptake facilitator protein (glpF) (Mycoplasma genitalium (strain ATCC 33530 / DSM 19775 / NCTC 10195 / G37) (Mycoplasmoides genitalium)).